The primary structure comprises 231 residues: Ribonuclease HII (231 aa).

Residues 33–222 form the RNase H type-2 domain; the sequence is WPVAGADEAG…FREAQEQPLA (190 aa). The a divalent metal cation site is built by Asp-39, Glu-40, and Asp-130.

Belongs to the RNase HII family. Requires Mn(2+) as cofactor. Mg(2+) is required as a cofactor.

The protein resides in the cytoplasm. It catalyses the reaction Endonucleolytic cleavage to 5'-phosphomonoester.. Endonuclease that specifically degrades the RNA of RNA-DNA hybrids. The protein is Ribonuclease HII of Sinorhizobium fredii (strain NBRC 101917 / NGR234).